Here is an 871-residue protein sequence, read N- to C-terminus: Translation initiation factor IF-2 (871 aa).

Disordered stretches follow at residues 60–101 (KKNI…QEVK) and 184–203 (ESLK…KKES). Residues 61 to 72 (KNIKTPTAKKPK) are compositionally biased toward basic residues. Over residues 73–101 (KENIKEQEKLNESEKKEPKKEEKLKQEVK) the composition is skewed to basic and acidic residues. Positions 370–537 (TRAPVITIMG…IVLLQADILE (168 aa)) constitute a tr-type G domain. The tract at residues 379-386 (GHVDHGKT) is G1. Residue 379-386 (GHVDHGKT) coordinates GTP. The G2 stretch occupies residues 404-408 (GITQH). The G3 stretch occupies residues 425–428 (DTPG). GTP contacts are provided by residues 425-429 (DTPGH) and 479-482 (NKMD). A G4 region spans residues 479 to 482 (NKMD). Positions 515 to 517 (SAK) are G5.

This sequence belongs to the TRAFAC class translation factor GTPase superfamily. Classic translation factor GTPase family. IF-2 subfamily.

It localises to the cytoplasm. Functionally, one of the essential components for the initiation of protein synthesis. Protects formylmethionyl-tRNA from spontaneous hydrolysis and promotes its binding to the 30S ribosomal subunits. Also involved in the hydrolysis of GTP during the formation of the 70S ribosomal complex. This Campylobacter jejuni (strain RM1221) protein is Translation initiation factor IF-2.